The primary structure comprises 357 residues: S-adenosylmethionine:tRNA ribosyltransferase-isomerase (357 aa).

This sequence belongs to the QueA family. In terms of assembly, monomer.

The protein localises to the cytoplasm. The enzyme catalyses 7-aminomethyl-7-carbaguanosine(34) in tRNA + S-adenosyl-L-methionine = epoxyqueuosine(34) in tRNA + adenine + L-methionine + 2 H(+). The protein operates within tRNA modification; tRNA-queuosine biosynthesis. In terms of biological role, transfers and isomerizes the ribose moiety from AdoMet to the 7-aminomethyl group of 7-deazaguanine (preQ1-tRNA) to give epoxyqueuosine (oQ-tRNA). This Edwardsiella ictaluri (strain 93-146) protein is S-adenosylmethionine:tRNA ribosyltransferase-isomerase.